The primary structure comprises 152 residues: UPF0266 membrane protein YobD (152 aa).

3 helical membrane-spanning segments follow: residues 6 to 26 (LVLI…QFIM), 45 to 65 (VDSV…VTSH), and 67 to 87 (AQMT…IFWI).

Belongs to the UPF0266 family.

The protein resides in the cell inner membrane. The sequence is that of UPF0266 membrane protein YobD from Salmonella paratyphi B (strain ATCC BAA-1250 / SPB7).